A 116-amino-acid chain; its full sequence is Large ribosomal subunit protein bL17 (116 aa).

This sequence belongs to the bacterial ribosomal protein bL17 family. Part of the 50S ribosomal subunit. Contacts protein L32.

This is Large ribosomal subunit protein bL17 from Chloroflexus aurantiacus (strain ATCC 29366 / DSM 635 / J-10-fl).